The sequence spans 412 residues: ATP phosphoribosyltransferase regulatory subunit (412 aa).

Belongs to the class-II aminoacyl-tRNA synthetase family. HisZ subfamily. As to quaternary structure, heteromultimer composed of HisG and HisZ subunits.

The protein resides in the cytoplasm. It functions in the pathway amino-acid biosynthesis; L-histidine biosynthesis; L-histidine from 5-phospho-alpha-D-ribose 1-diphosphate: step 1/9. Functionally, required for the first step of histidine biosynthesis. May allow the feedback regulation of ATP phosphoribosyltransferase activity by histidine. The chain is ATP phosphoribosyltransferase regulatory subunit from Dehalococcoides mccartyi (strain CBDB1).